A 450-amino-acid polypeptide reads, in one-letter code: Tubulin alpha-1 chain (450 aa).

GTP-binding residues include glutamine 11, glutamate 71, glycine 144, threonine 145, threonine 179, asparagine 206, and asparagine 228. Glutamate 71 contributes to the Mg(2+) binding site. Glutamate 254 is an active-site residue.

The protein belongs to the tubulin family. As to quaternary structure, dimer of alpha and beta chains. A typical microtubule is a hollow water-filled tube with an outer diameter of 25 nm and an inner diameter of 15 nM. Alpha-beta heterodimers associate head-to-tail to form protofilaments running lengthwise along the microtubule wall with the beta-tubulin subunit facing the microtubule plus end conferring a structural polarity. Microtubules usually have 13 protofilaments but different protofilament numbers can be found in some organisms and specialized cells. Mg(2+) is required as a cofactor. Undergoes a tyrosination/detyrosination cycle, the cyclic removal and re-addition of a C-terminal tyrosine residue by the enzymes tubulin tyrosine carboxypeptidase (TTCP) and tubulin tyrosine ligase (TTL), respectively.

It is found in the cytoplasm. The protein localises to the cytoskeleton. The enzyme catalyses GTP + H2O = GDP + phosphate + H(+). Its function is as follows. Tubulin is the major constituent of microtubules, a cylinder consisting of laterally associated linear protofilaments composed of alpha- and beta-tubulin heterodimers. Microtubules grow by the addition of GTP-tubulin dimers to the microtubule end, where a stabilizing cap forms. Below the cap, tubulin dimers are in GDP-bound state, owing to GTPase activity of alpha-tubulin. In Hordeum vulgare (Barley), this protein is Tubulin alpha-1 chain (TUBA1).